The sequence spans 475 residues: F-box protein At3g59150 (475 aa).

The 47-residue stretch at 12-58 (GDVISNLPNDLLCRILSYLSTKEAALTSILSKRWSNLLLSIPILDFD) folds into the F-box domain.

This is F-box protein At3g59150 from Arabidopsis thaliana (Mouse-ear cress).